Reading from the N-terminus, the 798-residue chain is Serine/threonine-protein kinase SIK2 (798 aa).

Residues 26 to 277 (YDIERTLGKG…ISQIKQHKWM (252 aa)) form the Protein kinase domain. Residues 32–40 (LGKGNFAVV) and K55 contribute to the ATP site. D148 (proton acceptor) is an active-site residue. T181 carries the phosphothreonine modification. S185 bears the Phosphoserine mark. Residues 302–342 (DYNEQVLGIMQTLGIDRQRTVESLQNSSYNHFAAIYYLLLE) form the UBA domain. Residues 351–361 (QLSSRPATGRQ) show a composition bias toward polar residues. The segment at 351–382 (QLSSRPATGRQQRPRSSEISNAEMPQDSLTSE) is disordered. Position 575 is a phosphoserine (S575). Positions 672–691 (ACPQTSQTSATNGLPPSDSA) are disordered. The span at 673 to 685 (CPQTSQTSATNGL) shows a compositional bias: polar residues.

This sequence belongs to the protein kinase superfamily. CAMK Ser/Thr protein kinase family. SNF1 subfamily. Mg(2+) is required as a cofactor. In terms of processing, phosphorylated at Thr-181 by STK11/LKB1 in complex with STE20-related adapter-alpha (STRADA) pseudo kinase and CAB39. As to expression, ubiquitously expressed in embryonic tissue.

It localises to the cytoplasm. It carries out the reaction L-seryl-[protein] + ATP = O-phospho-L-seryl-[protein] + ADP + H(+). The enzyme catalyses L-threonyl-[protein] + ATP = O-phospho-L-threonyl-[protein] + ADP + H(+). Its activity is regulated as follows. Activated by phosphorylation on Thr-181. Functionally, phosphorylates IRS1 in insulin-stimulated adipocytes, potentially modulating the efficiency of insulin signal transduction. Inhibits CREB activity by phosphorylating and repressing the CREB-specific coactivators, CRTC1-3. This Gallus gallus (Chicken) protein is Serine/threonine-protein kinase SIK2 (SIK2).